A 575-amino-acid chain; its full sequence is Adenine deaminase (575 aa).

Belongs to the metallo-dependent hydrolases superfamily. Adenine deaminase family. The cofactor is Mn(2+).

It catalyses the reaction adenine + H2O + H(+) = hypoxanthine + NH4(+). This Nitratidesulfovibrio vulgaris (strain ATCC 29579 / DSM 644 / CCUG 34227 / NCIMB 8303 / VKM B-1760 / Hildenborough) (Desulfovibrio vulgaris) protein is Adenine deaminase.